Here is a 253-residue protein sequence, read N- to C-terminus: Uracil-DNA glycosylase (253 aa).

Asp79 functions as the Proton acceptor in the catalytic mechanism.

The protein belongs to the uracil-DNA glycosylase (UDG) superfamily. UNG family.

It is found in the cytoplasm. It carries out the reaction Hydrolyzes single-stranded DNA or mismatched double-stranded DNA and polynucleotides, releasing free uracil.. Excises uracil residues from the DNA which can arise as a result of misincorporation of dUMP residues by DNA polymerase or due to deamination of cytosine. This Xylella fastidiosa (strain M23) protein is Uracil-DNA glycosylase.